We begin with the raw amino-acid sequence, 225 residues long: Membrane protein (225 aa).

Residues 1-20 lie on the Virion surface side of the membrane; it reads MSNETNCTLDFEQSVELFKE. The helical transmembrane segment at 21 to 41 threads the bilayer; that stretch reads YNLFITAFLLFLTIILQYGYA. Residues 42 to 51 lie on the Intravirion side of the membrane; it reads TRSKFIYILK. Residues 52–72 traverse the membrane as a helical segment; the sequence is MIVLWCFWPLNIAVGVISCIY. Residues 73–77 are Virion surface-facing; it reads PPNTG. A helical membrane pass occupies residues 78-98; the sequence is GLVAAIILTVFACLSFVGYWI. Residues 99–225 are Intravirion-facing; that stretch reads QSIRLFKRCR…VATGGSSLYT (127 aa).

The protein belongs to the gammacoronaviruses M protein family. Homomultimer. Interacts with envelope E protein in the budding compartment of the host cell, which is located between endoplasmic reticulum and the Golgi complex. Forms a complex with HE and S proteins. Interacts with nucleocapsid N protein. This interaction probably participates in RNA packaging into the virus.

It is found in the virion membrane. It localises to the host Golgi apparatus membrane. Its function is as follows. Component of the viral envelope that plays a central role in virus morphogenesis and assembly via its interactions with other viral proteins. The protein is Membrane protein of Gallus gallus (Chicken).